The following is a 453-amino-acid chain: tRNA modification GTPase MnmE (453 aa).

Positions 22, 79, and 119 each coordinate (6S)-5-formyl-5,6,7,8-tetrahydrofolate. Positions 215 to 376 (GMKVVIAGRP…LKQHLKSLMG (162 aa)) constitute a TrmE-type G domain. N225 is a K(+) binding site. GTP contacts are provided by residues 225–230 (NAGKSS), 244–250 (TEIAGTT), 269–272 (DTAG), and 334–337 (NKAD). Position 229 (S229) interacts with Mg(2+). Residues T244, I246, and T249 each contribute to the K(+) site. T250 contributes to the Mg(2+) binding site. K453 lines the (6S)-5-formyl-5,6,7,8-tetrahydrofolate pocket.

Belongs to the TRAFAC class TrmE-Era-EngA-EngB-Septin-like GTPase superfamily. TrmE GTPase family. Homodimer. Heterotetramer of two MnmE and two MnmG subunits. K(+) is required as a cofactor.

The protein localises to the cytoplasm. Its function is as follows. Exhibits a very high intrinsic GTPase hydrolysis rate. Involved in the addition of a carboxymethylaminomethyl (cmnm) group at the wobble position (U34) of certain tRNAs, forming tRNA-cmnm(5)s(2)U34. The protein is tRNA modification GTPase MnmE of Shewanella halifaxensis (strain HAW-EB4).